We begin with the raw amino-acid sequence, 429 residues long: Glutamate-1-semialdehyde 2,1-aminomutase (429 aa).

At Lys-267 the chain carries N6-(pyridoxal phosphate)lysine.

It belongs to the class-III pyridoxal-phosphate-dependent aminotransferase family. HemL subfamily. In terms of assembly, homodimer. Requires pyridoxal 5'-phosphate as cofactor.

It is found in the cytoplasm. It catalyses the reaction (S)-4-amino-5-oxopentanoate = 5-aminolevulinate. Its pathway is porphyrin-containing compound metabolism; protoporphyrin-IX biosynthesis; 5-aminolevulinate from L-glutamyl-tRNA(Glu): step 2/2. This chain is Glutamate-1-semialdehyde 2,1-aminomutase, found in Herpetosiphon aurantiacus (strain ATCC 23779 / DSM 785 / 114-95).